The following is a 378-amino-acid chain: Erythronate-4-phosphate dehydrogenase (378 aa).

Positions 45 and 66 each coordinate substrate. Positions 146 and 175 each coordinate NAD(+). The active site involves R208. D232 lines the NAD(+) pocket. Residue E237 is part of the active site. H254 acts as the Proton donor in catalysis. G257 lines the NAD(+) pocket. Substrate is bound at residue Y258.

This sequence belongs to the D-isomer specific 2-hydroxyacid dehydrogenase family. PdxB subfamily. In terms of assembly, homodimer.

It is found in the cytoplasm. The catalysed reaction is 4-phospho-D-erythronate + NAD(+) = (R)-3-hydroxy-2-oxo-4-phosphooxybutanoate + NADH + H(+). The protein operates within cofactor biosynthesis; pyridoxine 5'-phosphate biosynthesis; pyridoxine 5'-phosphate from D-erythrose 4-phosphate: step 2/5. Functionally, catalyzes the oxidation of erythronate-4-phosphate to 3-hydroxy-2-oxo-4-phosphonooxybutanoate. This Cronobacter sakazakii (strain ATCC BAA-894) (Enterobacter sakazakii) protein is Erythronate-4-phosphate dehydrogenase.